A 796-amino-acid chain; its full sequence is Cadherin-11 (796 aa).

Positions 1–24 (MKENYCLQAALVCLSMLYHSQAFA) are cleaved as a signal peptide. Residues 25–53 (LERRSHLHPSFHGHHEKGKEGQVLQRSKR) constitute a propeptide that is removed on maturation. 5 consecutive Cadherin domains span residues 54-159 (GWVW…PPEF), 160-268 (LHEI…PPKF), 269-383 (PQSV…PPMF), 384-486 (LAPS…DNAP), and 487-612 (KFAA…YILN). Over 54–617 (GWVWNQFFVI…AYILNAGLST (564 aa)) the chain is Extracellular. Residues Asn455 and Asn540 are each glycosylated (N-linked (GlcNAc...) asparagine). Residues 618-640 (GALIAILACIVILLVIVVLFVTL) traverse the membrane as a helical segment. At 641–796 (RRQKKEPLIV…GSKDTFDDDS (156 aa)) the chain is on the cytoplasmic side. Ser788 is subject to Phosphoserine. Residue Thr791 is modified to Phosphothreonine.

In terms of assembly, interacts with PCDH8. In terms of tissue distribution, selectively expressed in osteoblastic cell lines, precursor cell lines of osteoblasts, and primary osteoblastic cells from calvaria, as well as in lung, testis, and brain tissues at low levels.

Its subcellular location is the cell membrane. In terms of biological role, cadherins are calcium-dependent cell adhesion proteins. They preferentially interact with themselves in a homophilic manner in connecting cells; cadherins may thus contribute to the sorting of heterogeneous cell types. Required for proper focal adhesion assembly. Involved in the regulation of cell migration. This Mus musculus (Mouse) protein is Cadherin-11 (Cdh11).